The primary structure comprises 562 residues: NAD-dependent malic enzyme (562 aa).

The active-site Proton donor is tyrosine 101. An NAD(+)-binding site is contributed by arginine 154. The Proton acceptor role is filled by lysine 172. 3 residues coordinate a divalent metal cation: glutamate 243, aspartate 244, and aspartate 267. Residues aspartate 267 and asparagine 415 each contribute to the NAD(+) site.

Belongs to the malic enzymes family. As to quaternary structure, homotetramer. Mg(2+) is required as a cofactor. The cofactor is Mn(2+).

It catalyses the reaction (S)-malate + NAD(+) = pyruvate + CO2 + NADH. It carries out the reaction oxaloacetate + H(+) = pyruvate + CO2. The protein is NAD-dependent malic enzyme of Shewanella oneidensis (strain ATCC 700550 / JCM 31522 / CIP 106686 / LMG 19005 / NCIMB 14063 / MR-1).